Here is a 388-residue protein sequence, read N- to C-terminus: Putative membrane protein MJ1562 (388 aa).

The next 6 helical transmembrane spans lie at 22-42 (FLML…ATNV), 219-239 (SQSF…IIYF), 246-266 (IMPL…MGLL), 273-293 (ATAG…IHLM), 320-340 (AVMA…LAPL), and 351-371 (ALGI…LIVI).

This sequence belongs to the resistance-nodulation-cell division (RND) (TC 2.A.6) family. MmpL subfamily.

The protein resides in the cell membrane. This is Putative membrane protein MJ1562 from Methanocaldococcus jannaschii (strain ATCC 43067 / DSM 2661 / JAL-1 / JCM 10045 / NBRC 100440) (Methanococcus jannaschii).